A 92-amino-acid chain; its full sequence is Small ribosomal subunit protein uS19 (92 aa).

It belongs to the universal ribosomal protein uS19 family.

Its function is as follows. Protein S19 forms a complex with S13 that binds strongly to the 16S ribosomal RNA. The polypeptide is Small ribosomal subunit protein uS19 (Oceanobacillus iheyensis (strain DSM 14371 / CIP 107618 / JCM 11309 / KCTC 3954 / HTE831)).